A 133-amino-acid chain; its full sequence is Nickel-responsive regulator (133 aa).

Ni(2+)-binding residues include H76, H87, H89, and C95.

The protein belongs to the transcriptional regulatory CopG/NikR family. Homotetramer. It depends on Ni(2+) as a cofactor.

In terms of biological role, transcriptional repressor of the nikABCDE operon. Is active in the presence of excessive concentrations of intracellular nickel. In Salmonella arizonae (strain ATCC BAA-731 / CDC346-86 / RSK2980), this protein is Nickel-responsive regulator.